We begin with the raw amino-acid sequence, 880 residues long: Alanine--tRNA ligase (880 aa).

Zn(2+) is bound by residues His-567, His-571, Cys-669, and His-673.

This sequence belongs to the class-II aminoacyl-tRNA synthetase family. Requires Zn(2+) as cofactor.

The protein resides in the cytoplasm. The catalysed reaction is tRNA(Ala) + L-alanine + ATP = L-alanyl-tRNA(Ala) + AMP + diphosphate. Catalyzes the attachment of alanine to tRNA(Ala) in a two-step reaction: alanine is first activated by ATP to form Ala-AMP and then transferred to the acceptor end of tRNA(Ala). Also edits incorrectly charged Ser-tRNA(Ala) and Gly-tRNA(Ala) via its editing domain. This Bacillus anthracis protein is Alanine--tRNA ligase.